The sequence spans 241 residues: Leucyl/phenylalanyl-tRNA--protein transferase (241 aa).

It belongs to the L/F-transferase family.

Its subcellular location is the cytoplasm. It catalyses the reaction N-terminal L-lysyl-[protein] + L-leucyl-tRNA(Leu) = N-terminal L-leucyl-L-lysyl-[protein] + tRNA(Leu) + H(+). It carries out the reaction N-terminal L-arginyl-[protein] + L-leucyl-tRNA(Leu) = N-terminal L-leucyl-L-arginyl-[protein] + tRNA(Leu) + H(+). The enzyme catalyses L-phenylalanyl-tRNA(Phe) + an N-terminal L-alpha-aminoacyl-[protein] = an N-terminal L-phenylalanyl-L-alpha-aminoacyl-[protein] + tRNA(Phe). Its function is as follows. Functions in the N-end rule pathway of protein degradation where it conjugates Leu, Phe and, less efficiently, Met from aminoacyl-tRNAs to the N-termini of proteins containing an N-terminal arginine or lysine. The chain is Leucyl/phenylalanyl-tRNA--protein transferase from Neisseria meningitidis serogroup C / serotype 2a (strain ATCC 700532 / DSM 15464 / FAM18).